A 122-amino-acid chain; its full sequence is S-adenosylmethionine decarboxylase proenzyme (122 aa).

Ser63 functions as the Schiff-base intermediate with substrate; via pyruvic acid in the catalytic mechanism. A Pyruvic acid (Ser); by autocatalysis modification is found at Ser63. The Proton acceptor; for processing activity role is filled by His68. Residue Cys83 is the Proton donor; for catalytic activity of the active site.

Belongs to the prokaryotic AdoMetDC family. Type 1 subfamily. Heterotetramer of two alpha and two beta chains arranged as a dimer of alpha/beta heterodimers. It depends on pyruvate as a cofactor. Is synthesized initially as an inactive proenzyme. Formation of the active enzyme involves a self-maturation process in which the active site pyruvoyl group is generated from an internal serine residue via an autocatalytic post-translational modification. Two non-identical subunits are generated from the proenzyme in this reaction, and the pyruvate is formed at the N-terminus of the alpha chain, which is derived from the carboxyl end of the proenzyme. The post-translation cleavage follows an unusual pathway, termed non-hydrolytic serinolysis, in which the side chain hydroxyl group of the serine supplies its oxygen atom to form the C-terminus of the beta chain, while the remainder of the serine residue undergoes an oxidative deamination to produce ammonia and the pyruvoyl group blocking the N-terminus of the alpha chain.

It carries out the reaction S-adenosyl-L-methionine + H(+) = S-adenosyl 3-(methylsulfanyl)propylamine + CO2. It participates in amine and polyamine biosynthesis; S-adenosylmethioninamine biosynthesis; S-adenosylmethioninamine from S-adenosyl-L-methionine: step 1/1. In terms of biological role, catalyzes the decarboxylation of S-adenosylmethionine to S-adenosylmethioninamine (dcAdoMet), the propylamine donor required for the synthesis of the polyamines spermine and spermidine from the diamine putrescine. In Methanococcus vannielii (strain ATCC 35089 / DSM 1224 / JCM 13029 / OCM 148 / SB), this protein is S-adenosylmethionine decarboxylase proenzyme.